We begin with the raw amino-acid sequence, 454 residues long: UPF0210 protein EUBELI_01067 (454 aa).

Belongs to the UPF0210 family. Homodimer.

This chain is UPF0210 protein EUBELI_01067, found in Lachnospira eligens (strain ATCC 27750 / DSM 3376 / VPI C15-48 / C15-B4) (Eubacterium eligens).